A 204-amino-acid polypeptide reads, in one-letter code: Thymidine kinase (204 aa).

ATP is bound by residues G18–T25 and D91–Q94. E92 serves as the catalytic Proton acceptor. Zn(2+)-binding residues include C148, C151, C180, and H183.

The protein belongs to the thymidine kinase family. Homotetramer.

The protein resides in the cytoplasm. The enzyme catalyses thymidine + ATP = dTMP + ADP + H(+). This chain is Thymidine kinase, found in Bdellovibrio bacteriovorus (strain ATCC 15356 / DSM 50701 / NCIMB 9529 / HD100).